The primary structure comprises 345 residues: S-adenosylmethionine:tRNA ribosyltransferase-isomerase (345 aa).

It belongs to the QueA family. In terms of assembly, monomer.

The protein resides in the cytoplasm. The catalysed reaction is 7-aminomethyl-7-carbaguanosine(34) in tRNA + S-adenosyl-L-methionine = epoxyqueuosine(34) in tRNA + adenine + L-methionine + 2 H(+). It functions in the pathway tRNA modification; tRNA-queuosine biosynthesis. Its function is as follows. Transfers and isomerizes the ribose moiety from AdoMet to the 7-aminomethyl group of 7-deazaguanine (preQ1-tRNA) to give epoxyqueuosine (oQ-tRNA). In Shewanella sp. (strain MR-7), this protein is S-adenosylmethionine:tRNA ribosyltransferase-isomerase.